The following is a 309-amino-acid chain: Coproporphyrin III ferrochelatase (309 aa).

Fe-coproporphyrin III-binding positions include Y12, T14, R29, 45–46, S53, and Y124; that span reads RY. H182 and E263 together coordinate Fe(2+).

It belongs to the ferrochelatase family. In terms of assembly, monomer.

The protein localises to the cytoplasm. The catalysed reaction is Fe-coproporphyrin III + 2 H(+) = coproporphyrin III + Fe(2+). Its pathway is porphyrin-containing compound metabolism; protoheme biosynthesis. In terms of biological role, involved in coproporphyrin-dependent heme b biosynthesis. Catalyzes the insertion of ferrous iron into coproporphyrin III to form Fe-coproporphyrin III. This Listeria monocytogenes serovar 1/2a (strain ATCC BAA-679 / EGD-e) protein is Coproporphyrin III ferrochelatase.